Here is a 335-residue protein sequence, read N- to C-terminus: Phosphate acyltransferase (335 aa).

The protein belongs to the PlsX family. In terms of assembly, homodimer. Probably interacts with PlsY.

Its subcellular location is the cytoplasm. The enzyme catalyses a fatty acyl-[ACP] + phosphate = an acyl phosphate + holo-[ACP]. It functions in the pathway lipid metabolism; phospholipid metabolism. Its function is as follows. Catalyzes the reversible formation of acyl-phosphate (acyl-PO(4)) from acyl-[acyl-carrier-protein] (acyl-ACP). This enzyme utilizes acyl-ACP as fatty acyl donor, but not acyl-CoA. The chain is Phosphate acyltransferase from Clostridium botulinum (strain Loch Maree / Type A3).